We begin with the raw amino-acid sequence, 107 residues long: Iron-sulfur cluster assembly protein CyaY (107 aa).

This sequence belongs to the frataxin family.

In terms of biological role, involved in iron-sulfur (Fe-S) cluster assembly. May act as a regulator of Fe-S biogenesis. This chain is Iron-sulfur cluster assembly protein CyaY, found in Enterobacter sp. (strain 638).